A 298-amino-acid chain; its full sequence is 4-hydroxy-tetrahydrodipicolinate synthase (298 aa).

Residue T48 participates in pyruvate binding. Y137 (proton donor/acceptor) is an active-site residue. K166 serves as the catalytic Schiff-base intermediate with substrate. I207 provides a ligand contact to pyruvate.

It belongs to the DapA family. Homotetramer; dimer of dimers.

The protein localises to the cytoplasm. The catalysed reaction is L-aspartate 4-semialdehyde + pyruvate = (2S,4S)-4-hydroxy-2,3,4,5-tetrahydrodipicolinate + H2O + H(+). It participates in amino-acid biosynthesis; L-lysine biosynthesis via DAP pathway; (S)-tetrahydrodipicolinate from L-aspartate: step 3/4. Its function is as follows. Catalyzes the condensation of (S)-aspartate-beta-semialdehyde [(S)-ASA] and pyruvate to 4-hydroxy-tetrahydrodipicolinate (HTPA). This chain is 4-hydroxy-tetrahydrodipicolinate synthase, found in Campylobacter hominis (strain ATCC BAA-381 / DSM 21671 / CCUG 45161 / LMG 19568 / NCTC 13146 / CH001A).